The following is a 426-amino-acid chain: Glutamate-1-semialdehyde 2,1-aminomutase (426 aa).

Position 265 is an N6-(pyridoxal phosphate)lysine (lysine 265).

This sequence belongs to the class-III pyridoxal-phosphate-dependent aminotransferase family. HemL subfamily. As to quaternary structure, homodimer. Pyridoxal 5'-phosphate serves as cofactor.

It localises to the cytoplasm. The catalysed reaction is (S)-4-amino-5-oxopentanoate = 5-aminolevulinate. The protein operates within porphyrin-containing compound metabolism; protoporphyrin-IX biosynthesis; 5-aminolevulinate from L-glutamyl-tRNA(Glu): step 2/2. The chain is Glutamate-1-semialdehyde 2,1-aminomutase from Methylococcus capsulatus (strain ATCC 33009 / NCIMB 11132 / Bath).